Reading from the N-terminus, the 778-residue chain is Endonuclease MutS2 (778 aa).

An ATP-binding site is contributed by 328 to 335; it reads GPNTGGKT. The region spanning 702-777 is the Smr domain; the sequence is LDLRGKRYEE…GSGATIVTFK (76 aa).

It belongs to the DNA mismatch repair MutS family. MutS2 subfamily. In terms of assembly, homodimer. Binds to stalled ribosomes, contacting rRNA.

Its function is as follows. Endonuclease that is involved in the suppression of homologous recombination and thus may have a key role in the control of bacterial genetic diversity. In terms of biological role, acts as a ribosome collision sensor, splitting the ribosome into its 2 subunits. Detects stalled/collided 70S ribosomes which it binds and splits by an ATP-hydrolysis driven conformational change. Acts upstream of the ribosome quality control system (RQC), a ribosome-associated complex that mediates the extraction of incompletely synthesized nascent chains from stalled ribosomes and their subsequent degradation. Probably generates substrates for RQC. The chain is Endonuclease MutS2 from Streptococcus pneumoniae serotype 19F (strain G54).